Here is a 118-residue protein sequence, read N- to C-terminus: UPF0251 protein Teth39_0655 (118 aa).

This sequence belongs to the UPF0251 family.

This Thermoanaerobacter pseudethanolicus (strain ATCC 33223 / 39E) (Clostridium thermohydrosulfuricum) protein is UPF0251 protein Teth39_0655.